The sequence spans 373 residues: 3 beta-hydroxysteroid dehydrogenase/Delta 5--&gt;4-isomerase (373 aa).

Tyr-155 functions as the Proton acceptor in the catalytic mechanism. Lys-159 lines the NAD(+) pocket. Residues 288–308 (ISLEYWLAFLLEIVSFLLSPI) traverse the membrane as a helical segment.

Belongs to the 3-beta-HSD family.

It is found in the endoplasmic reticulum membrane. It localises to the mitochondrion membrane. It catalyses the reaction a 3beta-hydroxy-Delta(5)-steroid + NAD(+) = a 3-oxo-Delta(5)-steroid + NADH + H(+). The catalysed reaction is a 3-oxo-Delta(5)-steroid = a 3-oxo-Delta(4)-steroid. The protein operates within lipid metabolism; steroid biosynthesis. Its function is as follows. 3-beta-HSD is a bifunctional enzyme, that catalyzes the oxidative conversion of Delta(5)-ene-3-beta-hydroxy steroid, and the oxidative conversion of ketosteroids. The 3-beta-HSD enzymatic system plays a crucial role in the biosynthesis of all classes of hormonal steroids. The protein is 3 beta-hydroxysteroid dehydrogenase/Delta 5--&gt;4-isomerase (HSD3B) of Canis lupus familiaris (Dog).